A 259-amino-acid chain; its full sequence is Thiazole synthase (259 aa).

K100 acts as the Schiff-base intermediate with DXP in catalysis. Residues G161, 187–188 (AG), and 209–210 (NT) each bind 1-deoxy-D-xylulose 5-phosphate.

This sequence belongs to the ThiG family. In terms of assembly, homotetramer. Forms heterodimers with either ThiH or ThiS.

The protein localises to the cytoplasm. The enzyme catalyses [ThiS sulfur-carrier protein]-C-terminal-Gly-aminoethanethioate + 2-iminoacetate + 1-deoxy-D-xylulose 5-phosphate = [ThiS sulfur-carrier protein]-C-terminal Gly-Gly + 2-[(2R,5Z)-2-carboxy-4-methylthiazol-5(2H)-ylidene]ethyl phosphate + 2 H2O + H(+). The protein operates within cofactor biosynthesis; thiamine diphosphate biosynthesis. In terms of biological role, catalyzes the rearrangement of 1-deoxy-D-xylulose 5-phosphate (DXP) to produce the thiazole phosphate moiety of thiamine. Sulfur is provided by the thiocarboxylate moiety of the carrier protein ThiS. In vitro, sulfur can be provided by H(2)S. This is Thiazole synthase from Halalkalibacterium halodurans (strain ATCC BAA-125 / DSM 18197 / FERM 7344 / JCM 9153 / C-125) (Bacillus halodurans).